A 312-amino-acid polypeptide reads, in one-letter code: Telomere-binding protein OPG077 (312 aa).

Belongs to the orthopoxvirus OPG077 family.

It is found in the virion. Its function is as follows. DNA-binding protein which binds to the hairpin form of the viral telomeric sequence. Required for the production of mature virions (MV). The chain is Telomere-binding protein OPG077 (OPG077) from Vaccinia virus (strain L-IVP) (VACV).